A 214-amino-acid chain; its full sequence is Large ribosomal subunit protein bL25 (214 aa).

Disordered regions lie at residues Met-1–Leu-23 and Asp-182–Glu-214. Residues Asp-200–Glu-214 are compositionally biased toward acidic residues.

The protein belongs to the bacterial ribosomal protein bL25 family. CTC subfamily. Part of the 50S ribosomal subunit; part of the 5S rRNA/L5/L18/L25 subcomplex. Contacts the 5S rRNA. Binds to the 5S rRNA independently of L5 and L18.

Functionally, this is one of the proteins that binds to the 5S RNA in the ribosome where it forms part of the central protuberance. The sequence is that of Large ribosomal subunit protein bL25 from Alcanivorax borkumensis (strain ATCC 700651 / DSM 11573 / NCIMB 13689 / SK2).